A 360-amino-acid chain; its full sequence is Nicotinate-nucleotide--dimethylbenzimidazole phosphoribosyltransferase (360 aa).

E327 acts as the Proton acceptor in catalysis.

It belongs to the CobT family.

The catalysed reaction is 5,6-dimethylbenzimidazole + nicotinate beta-D-ribonucleotide = alpha-ribazole 5'-phosphate + nicotinate + H(+). The protein operates within nucleoside biosynthesis; alpha-ribazole biosynthesis; alpha-ribazole from 5,6-dimethylbenzimidazole: step 1/2. Functionally, catalyzes the synthesis of alpha-ribazole-5'-phosphate from nicotinate mononucleotide (NAMN) and 5,6-dimethylbenzimidazole (DMB). The sequence is that of Nicotinate-nucleotide--dimethylbenzimidazole phosphoribosyltransferase from Shewanella baltica (strain OS223).